Reading from the N-terminus, the 341-residue chain is MSSIIRYDWTAEELHALFDLSLPELLYRAASVHRQHFDPAEIQVSTLLSVKTGGCPEDCSYCPQAQRYDTGVTAQKLMDVDAVVAKARQAKLAGASRFCMGAAWRSPKDRDIPKIAAMIREVKALGLETCATLGMLNTCQAQALKDAGLDYYNHNVDTSPDFYDSVIHTRQYQDRLDTLAHVRDVGLKTCCGGIVGMGETRQHRVGLLLTLATLPAHPDSVPVNLLVQVAGTPLHGTQTLDPFEFVRMIAVARITMPRSMVRLSAGRESMSDELQLLCFMAGANSIFYGEKLLTTANPETERDQALFQRLGLRPMHLMENVSNQDQHHGNVHADIACKHVV.

In terms of domain architecture, Radical SAM core spans 40 to 267 (AEIQVSTLLS…RSMVRLSAGR (228 aa)). 3 residues coordinate [4Fe-4S] cluster: C55, C59, and C62. Residues C99, C130, C190, and R262 each coordinate [2Fe-2S] cluster.

The protein belongs to the radical SAM superfamily. Biotin synthase family. Homodimer. It depends on [4Fe-4S] cluster as a cofactor. [2Fe-2S] cluster is required as a cofactor.

The enzyme catalyses (4R,5S)-dethiobiotin + (sulfur carrier)-SH + 2 reduced [2Fe-2S]-[ferredoxin] + 2 S-adenosyl-L-methionine = (sulfur carrier)-H + biotin + 2 5'-deoxyadenosine + 2 L-methionine + 2 oxidized [2Fe-2S]-[ferredoxin]. The protein operates within cofactor biosynthesis; biotin biosynthesis; biotin from 7,8-diaminononanoate: step 2/2. Catalyzes the conversion of dethiobiotin (DTB) to biotin by the insertion of a sulfur atom into dethiobiotin via a radical-based mechanism. This Xylella fastidiosa (strain 9a5c) protein is Biotin synthase.